The chain runs to 317 residues: tRNA dimethylallyltransferase (317 aa).

G13–S20 serves as a coordination point for ATP. Substrate is bound at residue T15 to S20.

Belongs to the IPP transferase family. Monomer. Mg(2+) is required as a cofactor.

It carries out the reaction adenosine(37) in tRNA + dimethylallyl diphosphate = N(6)-dimethylallyladenosine(37) in tRNA + diphosphate. In terms of biological role, catalyzes the transfer of a dimethylallyl group onto the adenine at position 37 in tRNAs that read codons beginning with uridine, leading to the formation of N6-(dimethylallyl)adenosine (i(6)A). The sequence is that of tRNA dimethylallyltransferase from Kineococcus radiotolerans (strain ATCC BAA-149 / DSM 14245 / SRS30216).